A 325-amino-acid polypeptide reads, in one-letter code: UPF0285 protein MA_3856 (325 aa).

It belongs to the UPF0285 family.

This chain is UPF0285 protein MA_3856, found in Methanosarcina acetivorans (strain ATCC 35395 / DSM 2834 / JCM 12185 / C2A).